Here is a 190-residue protein sequence, read N- to C-terminus: Ras-like GTP-binding protein RhoL (190 aa).

18-25 (GDGMVGKT) is a GTP binding site. The Effector region signature appears at 40-48 (YIPTVFDNH). GTP is bound by residues 65-69 (DTAGQ) and 123-126 (TKLD). The residue at position 187 (C187) is a Cysteine methyl ester. A lipid anchor (S-geranylgeranyl cysteine) is attached at C187. Residues 188–190 (KIL) constitute a propeptide, removed in mature form.

Belongs to the small GTPase superfamily. Rho family. In terms of tissue distribution, highly expressed in the embryonic cephalic mesoderm starting from stage 6 and fading by stage 11. Hemocyte precursor cells.

It is found in the cell membrane. Functionally, essential for the maturation of hemocytes. The sequence is that of Ras-like GTP-binding protein RhoL (RhoL) from Drosophila melanogaster (Fruit fly).